A 140-amino-acid polypeptide reads, in one-letter code: Histone H2B (140 aa).

Residues 1 to 10 (MPPKAAEKKP) are compositionally biased toward basic and acidic residues. The interval 1-48 (MPPKAAEKKPSTGGKAPAGKAPAEKKEAGKKTAAAASGDKKKRGKTRK) is disordered. Residues lysine 8 and lysine 9 each carry the N6-acetyllysine; alternate modification. Glycyl lysine isopeptide (Lys-Gly) (interchain with G-Cter in SUMO); alternate cross-links involve residues lysine 8 and lysine 9. Residues 11 to 21 (STGGKAPAGKA) are compositionally biased toward low complexity. Lysine 15 is subject to N6-acetyllysine. Lysine 25 is subject to N6-acetyllysine; alternate. Lysine 25 is covalently cross-linked (Glycyl lysine isopeptide (Lys-Gly) (interchain with G-Cter in SUMO); alternate). A Glycyl lysine isopeptide (Lys-Gly) (interchain with G-Cter in SUMO) cross-link involves residue lysine 26. A Glycyl lysine isopeptide (Lys-Gly) (interchain with G-Cter in ubiquitin) cross-link involves residue lysine 134.

This sequence belongs to the histone H2B family. In terms of assembly, the nucleosome is a histone octamer containing two molecules each of H2A, H2B, H3 and H4 assembled in one H3-H4 heterotetramer and two H2A-H2B heterodimers. The octamer wraps approximately 147 bp of DNA. Monoubiquitinated by the ubc2-bre1 complex to form H2BK123ub1. H2BK123ub1 gives a specific tag for epigenetic transcriptional activation and is also prerequisite for H3K4me and H3K79me formation. H2BK123ub1 also modulates the formation of double-strand breaks during meiosis and is a prerequisite for DNA-damage checkpoint activation. In terms of processing, acetylated by gcn5 to form H2BK11ac and H2BK16ac. H2BK16ac can also be formed by esa1. Acetylation of N-terminal lysines and particularly formation of H2BK11acK16ac has a positive effect on transcription. Post-translationally, sumoylation to form H2BK6su or H2BK7su, and probably also H2BK16su or H2BK17su, occurs preferentially near the telomeres and represses gene transcription.

The protein resides in the nucleus. It is found in the chromosome. In terms of biological role, core component of nucleosome. Nucleosomes wrap and compact DNA into chromatin, limiting DNA accessibility to the cellular machineries which require DNA as a template. Histones thereby play a central role in transcription regulation, DNA repair, DNA replication and chromosomal stability. DNA accessibility is regulated via a complex set of post-translational modifications of histones, also called histone code, and nucleosome remodeling. The chain is Histone H2B (htb1) from Aspergillus clavatus (strain ATCC 1007 / CBS 513.65 / DSM 816 / NCTC 3887 / NRRL 1 / QM 1276 / 107).